We begin with the raw amino-acid sequence, 278 residues long: Delta(3,5)-Delta(2,4)-dienoyl-CoA isomerase, peroxisomal (278 aa).

An N-acetylmethionine modification is found at Met1. Residues 69 to 73 and Gly128 contribute to the substrate site; that span reads SGIDL. Residues 276–278 carry the Microbody targeting signal motif; the sequence is AKL.

It belongs to the enoyl-CoA hydratase/isomerase family. As to expression, expressed in roots, leaves, stems and flowers.

It localises to the peroxisome. The enzyme catalyses a (3E,5Z)-dienoyl-CoA = a (2E,4E)-(5,6-saturated)-dienoyl-CoA. Its pathway is lipid metabolism; fatty acid beta-oxidation. Its function is as follows. Converts 3,5-dienoyl-CoAs to the corresponding 2,4-dienoyl-CoAs. Involved in degradation of unsaturated fatty acids. This is Delta(3,5)-Delta(2,4)-dienoyl-CoA isomerase, peroxisomal from Arabidopsis thaliana (Mouse-ear cress).